The following is a 112-amino-acid chain: Putative pterin-4-alpha-carbinolamine dehydratase (112 aa).

The protein belongs to the pterin-4-alpha-carbinolamine dehydratase family.

The enzyme catalyses (4aS,6R)-4a-hydroxy-L-erythro-5,6,7,8-tetrahydrobiopterin = (6R)-L-erythro-6,7-dihydrobiopterin + H2O. This is Putative pterin-4-alpha-carbinolamine dehydratase from Shewanella sp. (strain MR-4).